We begin with the raw amino-acid sequence, 327 residues long: Mitochondrial substrate carrier family protein A (327 aa).

The disordered stretch occupies residues 1–36 (MVINNQNNNNQNNNQNNNNKNDNLNNSTTTTTTTAT). The Mitochondrial intermembrane portion of the chain corresponds to 1–48 (MVINNQNNNNQNNNQNNNNKNDNLNNSTTTTTTTATTTKSSTLFHSND). Solcar repeat units follow at residues 43–132 (LFHS…FKRM), 140–224 (ISVI…IKEK), and 233–323 (PPLY…AITL). Residues 49 to 66 (FFSGLIAGIVSRTLTAPL) form a helical membrane-spanning segment. At 67-106 (ERIKILNQVEVILKDGTKYNRIIPAFKVIIKEEGIAGLFR) the chain is on the mitochondrial matrix side. A helical membrane pass occupies residues 107-127 (GNFVNIIKAGPQSAIRFYSYG). Residues 128-145 (AFKRMASEPDGSISVINR) lie on the Mitochondrial intermembrane side of the membrane. Residues 146-166 (MWAGASSGVVSVALTHPLDVI) traverse the membrane as a helical segment. Residues 167–192 (KTHITVIAPTAATIKNVTKGIYRDLG) are Mitochondrial matrix-facing. Residues 193–213 (IIGFFRGLSAGILNIAPFAAL) form a helical membrane-spanning segment. Over 214-238 (NFTFYETIKEKTQQYILKSPPLYAP) the chain is Mitochondrial intermembrane. Residues 239-259 (SIYGAISGGLTMTILYPLDVV) traverse the membrane as a helical segment. At 260–303 (KRRIMLQHFDRNQLPIYKNFIDAIIKITKTEGISALYKGIRPAY) the chain is on the mitochondrial matrix side. The helical transmembrane segment at 304-324 (LKVIPTVSINFLIYEGAITLF) threads the bilayer. Topologically, residues 325 to 327 (EKK) are mitochondrial intermembrane.

Belongs to the mitochondrial carrier (TC 2.A.29) family.

Its subcellular location is the mitochondrion inner membrane. Functionally, calcium-dependent mitochondrial solute carrier. Mitochondrial solute carriers shuttle metabolites, nucleotides, and cofactors through the mitochondrial inner membrane. The sequence is that of Mitochondrial substrate carrier family protein A (mcfA) from Dictyostelium discoideum (Social amoeba).